A 206-amino-acid chain; its full sequence is MAIVTVYNQQKEETGKINLSSKIFEVQVQPEILHLVVRAQLAAKRAGTHSVKTRGHVSGGGAKPWRQKGTGRARAGSNRSPLWRGGGIVFGPQPRDYSFKVNKKIRSLALCMALSSRFAEENLIVIDNIVLPEIKTKHFVGVANILGLHKALIVAPVESTQLLLSMRNVPNVKLLTYDRLNVYDILKYKQLVLLEGAVQHIEARLK.

Residues 48–78 are disordered; the sequence is THSVKTRGHVSGGGAKPWRQKGTGRARAGSN.

It belongs to the universal ribosomal protein uL4 family. As to quaternary structure, part of the 50S ribosomal subunit.

Its function is as follows. One of the primary rRNA binding proteins, this protein initially binds near the 5'-end of the 23S rRNA. It is important during the early stages of 50S assembly. It makes multiple contacts with different domains of the 23S rRNA in the assembled 50S subunit and ribosome. Forms part of the polypeptide exit tunnel. The polypeptide is Large ribosomal subunit protein uL4 (Lawsonia intracellularis (strain PHE/MN1-00)).